The sequence spans 283 residues: uncharacterized protein (283 aa).

6 consecutive transmembrane segments (helical) span residues 28 to 48 (LSSTSGAIGAIFGIILSILLI), 65 to 85 (LTSLIVASFGFLIALIIGFIL), 113 to 133 (LKRGFLYWIGNIILSIIFMIV), 135 to 155 (ILFIIFGVFLIFLPLVGIVFI), 200 to 220 (LNYIILLIIVGVIVIVINFVV), and 246 to 266 (IVDVISAVISAFVGFYTAVFA).

It to M.jannaschii MJ0233.

The protein resides in the cell membrane. This is an uncharacterized protein from Methanocaldococcus jannaschii (strain ATCC 43067 / DSM 2661 / JAL-1 / JCM 10045 / NBRC 100440) (Methanococcus jannaschii).